The following is a 145-amino-acid chain: D-aminoacyl-tRNA deacylase (145 aa).

The Gly-cisPro motif, important for rejection of L-amino acids signature appears at 137–138; it reads GP.

The protein belongs to the DTD family. Homodimer.

The protein resides in the cytoplasm. It carries out the reaction glycyl-tRNA(Ala) + H2O = tRNA(Ala) + glycine + H(+). The enzyme catalyses a D-aminoacyl-tRNA + H2O = a tRNA + a D-alpha-amino acid + H(+). In terms of biological role, an aminoacyl-tRNA editing enzyme that deacylates mischarged D-aminoacyl-tRNAs. Also deacylates mischarged glycyl-tRNA(Ala), protecting cells against glycine mischarging by AlaRS. Acts via tRNA-based rather than protein-based catalysis; rejects L-amino acids rather than detecting D-amino acids in the active site. By recycling D-aminoacyl-tRNA to D-amino acids and free tRNA molecules, this enzyme counteracts the toxicity associated with the formation of D-aminoacyl-tRNA entities in vivo and helps enforce protein L-homochirality. This chain is D-aminoacyl-tRNA deacylase, found in Shewanella baltica (strain OS195).